Reading from the N-terminus, the 33-residue chain is Toxin Bcg III 25.52 (33 aa).

An intrachain disulfide couples Cys-6 to Cys-28.

It localises to the secreted. The protein resides in the nematocyst. In Bunodosoma cangicum (Sea anemone), this protein is Toxin Bcg III 25.52.